A 400-amino-acid chain; its full sequence is MLRNSVITPTPPAKNLASFVTKPTTDIMGYHDNTTRLSNRIDDIETWRETLEKTLADVDEEIRKLEEDKDLAERALEAKALPLDVASECKTLRDGRRDNDVVDDLANSEVGKEIDVIEGIKDALQAKVSSAFEQLCLLQEARQQLHADLRDKTEAKKIDTYCHDLTISSPDICYQPNSTRTPKGSTTPQTWEDFSRYNKDRADAEMRSSQRLREAIHSTVAQTDNDLEAQRQATEFALRKRIHEMKRAKDEDEWQKKNTEEEIAKQERNIRELEQAIKDKENPLKLAMTRLENRTYRPNVELCRDNAQYGLVNEVHEIQDSIKALEKKLQDAHNARDACEKQLYRINKDLELKNNSLDLDNKCMQVREKLTTGPVTQTMNNLSTFKTDRELYTAQRSLLA.

Coiled coils occupy residues 35-81, 236-294, and 310-353; these read TRLS…AKAL, FALR…LENR, and GLVN…LELK.

It belongs to the tektin family. As to quaternary structure, may form a heterodimer with tektin a or exist as a homodimer. In terms of tissue distribution, cilia and flagella.

It is found in the cytoplasm. Its subcellular location is the cytoskeleton. Its function is as follows. Structural component of ciliary and flagellar microtubules. The protein is Tektin-B1 of Strongylocentrotus purpuratus (Purple sea urchin).